Here is a 113-residue protein sequence, read N- to C-terminus: Large ribosomal subunit protein uL22 (113 aa).

It belongs to the universal ribosomal protein uL22 family. In terms of assembly, part of the 50S ribosomal subunit.

Functionally, this protein binds specifically to 23S rRNA; its binding is stimulated by other ribosomal proteins, e.g. L4, L17, and L20. It is important during the early stages of 50S assembly. It makes multiple contacts with different domains of the 23S rRNA in the assembled 50S subunit and ribosome. Its function is as follows. The globular domain of the protein is located near the polypeptide exit tunnel on the outside of the subunit, while an extended beta-hairpin is found that lines the wall of the exit tunnel in the center of the 70S ribosome. The polypeptide is Large ribosomal subunit protein uL22 (Bacillus subtilis (strain 168)).